The chain runs to 150 residues: 3-hydroxyacyl-[acyl-carrier-protein] dehydratase FabZ (150 aa).

H51 is an active-site residue.

The protein belongs to the thioester dehydratase family. FabZ subfamily.

It localises to the cytoplasm. The catalysed reaction is a (3R)-hydroxyacyl-[ACP] = a (2E)-enoyl-[ACP] + H2O. Involved in unsaturated fatty acids biosynthesis. Catalyzes the dehydration of short chain beta-hydroxyacyl-ACPs and long chain saturated and unsaturated beta-hydroxyacyl-ACPs. This is 3-hydroxyacyl-[acyl-carrier-protein] dehydratase FabZ from Rubrobacter xylanophilus (strain DSM 9941 / JCM 11954 / NBRC 16129 / PRD-1).